The primary structure comprises 747 residues: Small G protein signaling modulator 3 (747 aa).

The region spanning 111–302 (GVPHSMRPQL…RLWDLFFYEG (192 aa)) is the Rab-GAP TBC domain. Serine 403 carries the post-translational modification Phosphoserine. Residues 412–435 (EDDLEAMKAKNIKQTELVADLREA) are a coiled coil. One can recognise an SH3 domain in the interval 477-536 (GHPRRAKALLDFERHDDDELGFRKNDIITIVSQKDEHCWVGELNGLRGWFPAKFVEVLDE). Residues 552–715 (GVTDLVRGTL…FAFSLSQDWE (164 aa)) enclose the RUN domain.

It belongs to the small G protein signaling modulator family. In terms of assembly, interacts with GJA1. Interaction with GJA1 induces its degradation. Interacts via its RUN domain with the C-terminal region of NF2. Interacts with RAB3A, RAB4A, RAB5A, RAB8A, RAB11A, RAP1A, RAP1B, RAP2A, RAP2B and PDCD6I. No interaction with RAB27A.

The protein localises to the cytoplasm. May play a cooperative role in NF2-mediated growth suppression of cells. The chain is Small G protein signaling modulator 3 from Bos taurus (Bovine).